The following is a 1169-amino-acid chain: Pesticidal crystal protein Cry1Fb (1169 aa).

It belongs to the delta endotoxin family.

Promotes colloidosmotic lysis by binding to the midgut epithelial cells of insects. The protein is Pesticidal crystal protein Cry1Fb (cry1Fb) of Bacillus thuringiensis subsp. morrisoni.